The chain runs to 229 residues: Probable U3 small nucleolar RNA-associated protein 11 (229 aa).

2 disordered regions span residues 1–23 (MSSLRNAIQRRAHKERAQPESRK) and 199–229 (KKPGRKRKLREDEIENQTSRPVYKWRAQRKR).

The protein belongs to the UTP11 family. In terms of assembly, component of the ribosomal small subunit (SSU) processome.

It localises to the nucleus. It is found in the nucleolus. Involved in nucleolar processing of pre-18S ribosomal RNA. This Oryza sativa subsp. japonica (Rice) protein is Probable U3 small nucleolar RNA-associated protein 11.